Reading from the N-terminus, the 465-residue chain is Branched-chain amino acid permease BcaP (465 aa).

Transmembrane regions (helical) follow at residues 28–48, 56–76, 88–110, 149–169, 181–201, 219–239, 259–279, 309–329, 359–379, 380–400, 416–436, and 438–458; these read FLAL…PGQV, GVVF…LAYA, AYSW…ALLA, DGGI…IIVF, ILVV…ITVI, FGGF…YIGF, GIIG…LVLV, VVTA…VLAG, VWTL…AFLA, QLIS…IYSL, PFYP…FWGL, and VQAK…YFAY.

This sequence belongs to the amino acid-polyamine-organocation (APC) superfamily.

Its subcellular location is the cell membrane. In terms of biological role, branched-chain amino acid transport system that specifically transports branched-chain amino acids (BCAAs) (isoleucine, leucine and valine) and, to a lesser extent, methionine. Important for CodY-mediated regulation, and required for optimal growth in media containing free amino acids as the only amino acid source. In Lactococcus lactis subsp. cremoris (strain MG1363), this protein is Branched-chain amino acid permease BcaP.